Reading from the N-terminus, the 91-residue chain is Hepcidin-1 (91 aa).

The N-terminal stretch at 1–24 (MKLSNVFLAAVVILTCVCVFQITA) is a signal peptide. A propeptide spanning residues 25–64 (VPFIQQVQDEHHVESEELQENQHLTEAEHRQTDPLVLFRT) is cleaved from the precursor. Intrachain disulfides connect Cys73-Cys89, Cys76-Cys79, Cys77-Cys85, and Cys80-Cys88.

It belongs to the hepcidin family.

Its subcellular location is the secreted. Its function is as follows. Seems to act as a signaling molecule involved in the maintenance of iron homeostasis. Seems to be required in conjunction with HFE to regulate both intestinal iron absorption and iron storage in macrophages. May also have antimicrobial activity. The sequence is that of Hepcidin-1 (hamp1) from Danio rerio (Zebrafish).